Reading from the N-terminus, the 958-residue chain is MAVISVKPRRREKILQEVKNSSVYQTVFDSGTTQMQIPKYENKPFKPPRRVGSNKYTQLKPTATAVTTAPISKAKVTVNLKRSISAGPTLNLAKKPNNLSSNENTRYFTIMYRKPTTKKHKTWSGDGYATLKASSDKLCFYNEAGKFLGSSMLPSDSDSLFETLFKAGSNEVQLDYELKENAEIRSAKEALSQNMGNPSPPTTSTTETVPSTKNDGGKYQMPLSQLFSLNTVKRFKSVTKQTNEHMTTVPKTSQNSKAKKYYPVFDVNKIDNPIVMNKNAAAEVDVIVDPLLGKFLRPHQREGVKFMYDCLMGLARPTIENPDIDCTTKSLVLENDSDISGCLLADDMGLGKTLMSITLIWTLIRQTPFASKVSCSQSGIPLTGLCKKILVVCPVTLIGNWKREFGKWLNLSRIGVLTLSSRNSPDMDKMAVRNFLKVQRTYQVLIIGYEKLLSVSEELEKNKHLIDMLVCDEGHRLKNGASKILNTLKSLDIRRKLLLTGTPIQNDLNEFFTIIDFINPGILGSFASFKRRFIIPITRARDTANRYNEELLEKGEERSKEMIEITKRFILRRTNAILEKYLPPKTDIILFCKPYSQQILAFKDILQGARLDFGQLTFSSSLGLITLLKKVCNSPGLVGSDPYYKSHIKDTQSQDSYSRSLNSGKLKVLMTLLEGIRKGTKEKVVVVSNYTQTLDIIENLMNMAGMSHCRLDGSIPAKQRDSIVTSFNRNPAIFGFLLSAKSGGVGLNLVGASRLILFDNDWNPSVDLQAMSRIHRDGQKKPCFIYRLVTTGCIDEKILQRQLMKNSLSQKFLGDSEMRNKESSNDDLFNKEDLKDLFSVHTDTKSNTHDLICSCDGLGEEIEYPETNQQQNTVELRKRSTTTWTSALDLQKKMNEAATNDDAKKSQYIRQCLVHYKHIDPARQDELFDEVITDSFTELKDSITFAFVKPGEICLREQ.

The tract at residues E189–G217 is disordered. Residues T202 to T212 show a composition bias toward low complexity. Positions L333–G521 constitute a Helicase ATP-binding domain. I380–K387 provides a ligand contact to ATP. Residues N506–N509 carry the DEGH box motif. K649 is covalently cross-linked (Glycyl lysine isopeptide (Lys-Gly) (interchain with G-Cter in ubiquitin)). Residues K665–S824 enclose the Helicase C-terminal domain.

Belongs to the SNF2/RAD54 helicase family. As to quaternary structure, interacts with RAD51 and DMC1.

The protein resides in the nucleus. It carries out the reaction ATP + H2O = ADP + phosphate + H(+). Functionally, involved in the recombinational repair of double-strand breaks (DSB) in DNA during mitosis and meiosis. Has DNA dependent ATPase activity. Promotes D-loop (displacement loop) formation with RAD51 recombinase. Modifies the topology of double-stranded DNA during the D-loop reaction to facilitate the invasion of the homologous duplex molecule by the initiating single-stranded DNA substrate. Required for adaptation from G2/M checkpoint arrest induced by a double strand break, by participating in monitoring the extent of single-stranded DNA produced by resection of DNA ends. This role is distinct from its roles in recombination. Promotes colocalization of RAD51 and DMC1 during meiotic recombination. Involved in crossover interference. This Saccharomyces cerevisiae (strain ATCC 204508 / S288c) (Baker's yeast) protein is DNA repair and recombination protein RDH54 (RDH54).